The sequence spans 94 residues: C-X-C motif chemokine 11-1 (94 aa).

The first 19 residues, 1 to 19, serve as a signal peptide directing secretion; that stretch reads MKTVTALLLVSLAVVAIEG. Cystine bridges form between Cys-27–Cys-54 and Cys-29–Cys-71.

The protein belongs to the intercrine alpha (chemokine CxC) family.

The protein localises to the secreted. In terms of biological role, ligand for cxcr3.2. Chemotactic for macrophages. The protein is C-X-C motif chemokine 11-1 (cxcl11.1) of Danio rerio (Zebrafish).